The primary structure comprises 748 residues: Catalase-peroxidase (748 aa).

A cross-link (tryptophyl-tyrosyl-methioninium (Trp-Tyr) (with M-268)) is located at residues 91–242 (WHSAGTYRIG…LAAVQMGLIY (152 aa)). His92 acts as the Proton acceptor in catalysis. A disordered region spans residues 194 to 223 (DRYGKGKGSSSQGEIPADAHRHGQEQARTA). Positions 242 to 268 (YVNPEGPEGNPDPLAAAHDIRETFARM) form a cross-link, tryptophyl-tyrosyl-methioninium (Tyr-Met) (with W-91). A heme b-binding site is contributed by His283. Positions 288–310 (THGAGDAKHVGREPEGEDMDSQG) are disordered. Over residues 290-301 (GAGDAKHVGREP) the composition is skewed to basic and acidic residues.

Belongs to the peroxidase family. Peroxidase/catalase subfamily. As to quaternary structure, homodimer or homotetramer. Requires heme b as cofactor. Post-translationally, formation of the three residue Trp-Tyr-Met cross-link is important for the catalase, but not the peroxidase activity of the enzyme.

It carries out the reaction H2O2 + AH2 = A + 2 H2O. The catalysed reaction is 2 H2O2 = O2 + 2 H2O. Functionally, bifunctional enzyme with both catalase and broad-spectrum peroxidase activity. This is Catalase-peroxidase from Herbaspirillum seropedicae.